The following is a 1023-amino-acid chain: Sodium/potassium-transporting ATPase subunit alpha-1 (1023 aa).

The propeptide occupies methionine 1–valine 5. The span at methionine 1–glutamate 11 shows a compositional bias: basic and acidic residues. The segment at methionine 1 to valine 39 is disordered. The Cytoplasmic portion of the chain corresponds to glycine 6 to leucine 96. Lysine 9 carries the N6-acetyllysine modification. Phosphotyrosine is present on tyrosine 10. Serine 16 bears the Phosphoserine mark. N6-acetyllysine is present on lysine 21. Basic and acidic residues predominate over residues lysine 28–valine 39. A phosphoserine mark is found at serine 40 and serine 47. The phosphoinositide-3 kinase binding stretch occupies residues proline 82–proline 84. A helical transmembrane segment spans residues phenylalanine 97 to isoleucine 117. Residues arginine 118–aspartate 129 are Extracellular-facing. Residues leucine 130–glutamine 150 traverse the membrane as a helical segment. Over glutamate 151–phenylalanine 291 the chain is Cytoplasmic. The interval serine 216–asparagine 235 is disordered. Position 228 is a phosphoserine (serine 228). A Phosphotyrosine modification is found at tyrosine 260. A helical membrane pass occupies residues isoleucine 292–isoleucine 312. The Extracellular portion of the chain corresponds to leucine 313–glutamate 319. A helical transmembrane segment spans residues alanine 320–valine 340. The Cytoplasmic segment spans residues threonine 341–serine 775. The active-site 4-aspartylphosphate intermediate is aspartate 376. Phosphoserine occurs at positions 452 and 484. Lysine 487 provides a ligand contact to ATP. A Phosphotyrosine modification is found at tyrosine 542. The segment at arginine 596–aspartate 717 is mediates interaction with SCN7A. N6-succinyllysine is present on lysine 661. Phosphoserine occurs at positions 668 and 675. Aspartate 717 and aspartate 721 together coordinate Mg(2+). Residues isoleucine 776–isoleucine 798 form a helical membrane-spanning segment. Residues proline 799–proline 801 are Extracellular-facing. The chain crosses the membrane as a helical span at residues leucine 802–tyrosine 824. Over glutamate 825 to leucine 849 the chain is Cytoplasmic. A helical transmembrane segment spans residues isoleucine 850–isoleucine 872. The Extracellular portion of the chain corresponds to leucine 873 to glutamate 915. Residues phenylalanine 916–isoleucine 936 traverse the membrane as a helical segment. Over cysteine 937 to lysine 952 the chain is Cytoplasmic. Serine 943 carries the phosphoserine; by PKA modification. The chain crosses the membrane as a helical span at residues isoleucine 953–glycine 973. The Extracellular portion of the chain corresponds to methionine 974–arginine 979. A helical membrane pass occupies residues methionine 980–valine 1000. The Cytoplasmic portion of the chain corresponds to tyrosine 1001–tyrosine 1023.

Belongs to the cation transport ATPase (P-type) (TC 3.A.3) family. Type IIC subfamily. In terms of assembly, the sodium/potassium-transporting ATPase is composed of a catalytic alpha subunit, an auxiliary non-catalytic beta subunit and an additional regulatory subunit. Interacts with regulatory subunit FXYD1. Interacts with regulatory subunit FXYD3. Interacts with SIK1. Interacts with SLC35G1 and STIM1. Interacts with CLN3; this interaction regulates the sodium/potassium-transporting ATPase complex localization at the plasma membrane. Interacts with SCN7A; activates ATP1A1 P-type sodium:potassium-exchanging transporter activity which indirectly signals to nearby neurons to regulate sodium homeostasis. Post-translationally, phosphorylation on Tyr-10 modulates pumping activity. Phosphorylation of Ser-943 by PKA modulates the response of ATP1A1 to PKC. Dephosphorylation by protein phosphatase 2A (PP2A) following increases in intracellular sodium, leading to increase catalytic activity.

It localises to the cell membrane. The protein localises to the basolateral cell membrane. Its subcellular location is the sarcolemma. The protein resides in the cell projection. It is found in the axon. It localises to the melanosome. It carries out the reaction K(+)(out) + Na(+)(in) + ATP + H2O = K(+)(in) + Na(+)(out) + ADP + phosphate + H(+). Its function is as follows. This is the catalytic component of the active enzyme, which catalyzes the hydrolysis of ATP coupled with the exchange of sodium and potassium ions across the plasma membrane. This action creates the electrochemical gradient of sodium and potassium ions, providing the energy for active transport of various nutrients. Could also be part of an osmosensory signaling pathway that senses body-fluid sodium levels and controls salt intake behavior as well as voluntary water intake to regulate sodium homeostasis. In Mus musculus (Mouse), this protein is Sodium/potassium-transporting ATPase subunit alpha-1 (Atp1a1).